A 497-amino-acid chain; its full sequence is Di-/tripeptide transporter (497 aa).

The Cytoplasmic segment spans residues 1-36; it reads MQNLNKTEKTFFGQPRGLLTLFQTEFWERFSYYGMR. Residues 37-55 traverse the membrane as a helical segment; that stretch reads AILVYYLYALTTADNAGLG. Topologically, residues 56 to 64 are extracellular; sequence LPKAQAMAI. Residues 65-83 form a helical membrane-spanning segment; that stretch reads VSIYGALVYLSTIVGGWVA. At 84–92 the chain is on the cytoplasmic side; the sequence is DRLLGASRT. A helical membrane pass occupies residues 93-111; that stretch reads IFLGGILITLGHIALATPF. At 112–115 the chain is on the extracellular side; it reads GLSS. Residues 116–134 form a helical membrane-spanning segment; that stretch reads LFVALFLIILGTGMLKPNI. Residues 135–154 are Cytoplasmic-facing; sequence SNMVGHLYSKDDSRRDTGFN. Residues 155–173 traverse the membrane as a helical segment; it reads IFVVGINMGSLIAPLIVGT. The Extracellular segment spans residues 174–181; it reads VGQGVNYH. Residues 182-200 traverse the membrane as a helical segment; sequence LGFSLAAIGMIFALFAYWY. Residues 201–224 are Cytoplasmic-facing; the sequence is GRLRHFPEIGREPSNPMDSKARRN. A helical transmembrane segment spans residues 225 to 243; sequence FLITLTIVVIVAIIGFFLL. At 244–254 the chain is on the extracellular side; it reads YQASPANFINN. The helical transmembrane segment at 255–273 threads the bilayer; sequence FINVLSIIGIVVPIIYFVM. The Cytoplasmic segment spans residues 274–293; the sequence is MFTSKKVESDERRKLTAYIP. The helical transmembrane segment at 294–312 threads the bilayer; that stretch reads LFLSAIVFWAIEEQSSTII. At 313–335 the chain is on the extracellular side; the sequence is AVWGESRSNLDPTWFGITFHIDP. Residues 336-354 traverse the membrane as a helical segment; it reads SWYQLLNPLFIVLLSPIFV. Residues 355–372 are Cytoplasmic-facing; it reads RLWNKLGERQPSTIVKFG. Residues 373–391 traverse the membrane as a helical segment; that stretch reads LGLMLTGISYLIMTLPGLL. Residues 392–425 lie on the Extracellular side of the membrane; that stretch reads NGTSGRASALWLVLMFAVQMAGELLVSPVGLSVS. The chain crosses the membrane as a helical span at residues 426–444; that stretch reads TKLAPVAFQSQMMAMWFLA. The Cytoplasmic segment spans residues 445–497; the sequence is DSTSQAINAQITPLFKAATEVHFFAITGIIGIIVGIILLIVKKPILKLMGDVR.

The protein belongs to the major facilitator superfamily. Proton-dependent oligopeptide transporter (POT/PTR) (TC 2.A.17) family.

Its subcellular location is the cell membrane. Its function is as follows. Proton-dependent uptake of di- or tri-peptides. The protein is Di-/tripeptide transporter (dtpT) of Lactococcus lactis subsp. lactis (strain IL1403) (Streptococcus lactis).